A 452-amino-acid chain; its full sequence is MKLKYFGTDGVRGVANRDLSPELAFRVGRAGGYVLTRHSQRKRPQVLVSRDTRISGEMLENALVAGLLSVGIEVFRLGVVTTPGVAYLVRAQEADAGVMITASHNPIQYNGIKYFGGDGFKLSDELEYEIEQLLDAEEDILPRPSDDGLGTVEDYREGALKYTSFLEQTISTDLDGLKVVIDGANGATSSFIANLFADVNADFIPLHVSPNGLNTNLNCGSTHPADLQKAVVENQADLGIAFDGDGDRCIAVDNEGNLVDGDKIMYICGKSMEANGRLKKDTVVTTVMSNLGMYKALESHGMKSVKTKVGDRYVVEEMLKNGYNLGGEQSGHIIFLDHNTTGDGMLTALQLLQVVKTSGKSLKELAADVVTYPQELVNITVEDKEAALNNQELKNAIAKVEEKMAGDGRILVRPSGTEPLLRIMAEAPTKELVHAYVSQIADVARQVLPGAK.

The Phosphoserine intermediate role is filled by Ser-103. Residues Ser-103, Asp-243, Asp-245, and Asp-247 each coordinate Mg(2+). Ser-103 bears the Phosphoserine mark.

It belongs to the phosphohexose mutase family. The cofactor is Mg(2+). In terms of processing, activated by phosphorylation.

It carries out the reaction alpha-D-glucosamine 1-phosphate = D-glucosamine 6-phosphate. Functionally, catalyzes the conversion of glucosamine-6-phosphate to glucosamine-1-phosphate. The chain is Phosphoglucosamine mutase from Limosilactobacillus fermentum (strain NBRC 3956 / LMG 18251) (Lactobacillus fermentum).